We begin with the raw amino-acid sequence, 67 residues long: Small ribosomal subunit protein bS21 (67 aa).

It belongs to the bacterial ribosomal protein bS21 family.

In Paramagnetospirillum magneticum (strain ATCC 700264 / AMB-1) (Magnetospirillum magneticum), this protein is Small ribosomal subunit protein bS21.